A 323-amino-acid chain; its full sequence is Ubiquinone biosynthesis protein COQ4, mitochondrial (323 aa).

Residues H203, D204, H207, and E219 each contribute to the Zn(2+) site.

This sequence belongs to the COQ4 family. As to quaternary structure, component of a multi-subunit COQ enzyme complex, composed of at least COQ3, COQ4, COQ5, COQ6, COQ7 and COQ9. Zn(2+) serves as cofactor.

The protein resides in the mitochondrion inner membrane. The catalysed reaction is a 4-hydroxy-3-methoxy-5-(all-trans-polyprenyl)benzoate + H(+) = a 2-methoxy-6-(all-trans-polyprenyl)phenol + CO2. The protein operates within cofactor biosynthesis; ubiquinone biosynthesis. Functionally, lyase that catalyzes the C1-decarboxylation of 4-hydroxy-3-methoxy-5-(all-trans-polyprenyl)benzoic acid into 2-methoxy-6-(all-trans-polyprenyl)phenol during ubiquinone biosynthesis. The chain is Ubiquinone biosynthesis protein COQ4, mitochondrial from Eremothecium gossypii (strain ATCC 10895 / CBS 109.51 / FGSC 9923 / NRRL Y-1056) (Yeast).